A 195-amino-acid chain; its full sequence is Protein Fer3 (195 aa).

Disordered stretches follow at residues 1-24 (MQHPHPIDQPTYMPDVPFQPLWGQ) and 56-82 (PLVPQRPSTNGRANGSSSSSKKTRRRV). Residues 63-75 (STNGRANGSSSSS) are compositionally biased toward low complexity. The bHLH domain occupies 86–138 (AQRRAANIRERRRMFNLNEAFDKLRRKVPTFAYEKRLSRIETLRLAITYIGFM). Positions 145–175 (TPSNSHKSRSDVYGSMNGHHQAPPPAIHPHH) are disordered.

It localises to the nucleus. In terms of biological role, transcription factor that binds to the E-box and functions as inhibitor of transcription. DNA binding requires dimerization with an E protein. Inhibits transcription activation by ASCL1/MASH1 by sequestering E proteins. The protein is Protein Fer3 (fer3) of Drosophila melanogaster (Fruit fly).